Reading from the N-terminus, the 112-residue chain is Ig kappa chain V-II region 2S1.3 (112 aa).

The framework-1 stretch occupies residues 1-23 (DIVMTQAAFSNPVTLGTSASFSC). Residues cysteine 23 and cysteine 93 are joined by a disulfide bond. A complementarity-determining-1 region spans residues 24–39 (RSSKSLQQSKGITYLY). Residues 40–54 (WYLQKPGQSPQLLIY) form a framework-2 region. The complementarity-determining-2 stretch occupies residues 55–61 (QMSNLAS). Residues 62 to 93 (GVPDRFSGSGSGTDFTLRISRVEAEDVGVYYC) are framework-3. The complementarity-determining-3 stretch occupies residues 94–102 (ANLQELPYT). A framework-4 region spans residues 103-112 (FGGGTKLEIK).

The polypeptide is Ig kappa chain V-II region 2S1.3 (Mus musculus (Mouse)).